The following is a 308-amino-acid chain: 3'(2'),5'-bisphosphate nucleotidase 1 (308 aa).

The residue at position 2 (alanine 2) is an N-acetylalanine. The Proton acceptor role is filled by aspartate 51. Mg(2+) contacts are provided by glutamate 74, aspartate 117, valine 119, and aspartate 120. The active-site Proton acceptor is threonine 122. Position 122 is a phosphothreonine (threonine 122). Threonine 195, histidine 198, glycine 220, and lysine 224 together coordinate AMP. At serine 240 the chain carries Phosphoserine. Lysine 244 bears the N6-succinyllysine mark. A Mg(2+)-binding site is contributed by aspartate 247.

This sequence belongs to the inositol monophosphatase superfamily. It depends on Mg(2+) as a cofactor. Highly expressed in heart, brain, spleen, lung, liver, skeletal muscle, kidney and testis.

The catalysed reaction is adenosine 3',5'-bisphosphate + H2O = AMP + phosphate. It catalyses the reaction adenosine 2',5'-bisphosphate + H2O = AMP + phosphate. The enzyme catalyses 3'-phosphoadenylyl sulfate + H2O = adenosine 5'-phosphosulfate + phosphate. It carries out the reaction 1D-myo-inositol 1,4-bisphosphate + H2O = 1D-myo-inositol 4-phosphate + phosphate. The catalysed reaction is 1D-myo-inositol 1,3,4-trisphosphate + H2O = 1D-myo-inositol 3,4-bisphosphate + phosphate. Inhibited by Li(+) and Ca(2+), but not by Na(+). Functionally, phosphatase that converts 3'(2')-phosphoadenosine 5'-phosphate (PAP) to AMP and adenosine 3'-phosphate 5'-phosphosulfate (PAPS) to adenosine 5'-phosphosulfate (APS). Is also able to hydrolyze inositol 1,4-bisphosphate (Ins(1,4)P2) and inositol 1,3,4-trisphosphate (Ins(1,3,4)P3), but is not active on AMP, 3'-AMP, fructose-1,6-bisphosphate, Ins(1)P, Ins(2)P and Ins(1,4,5)P3. Probably prevents the toxic accumulation of PAP, a compound which inhibits a variety of proteins, including PAPS-utilizing enzymes such as sulfotransferases, and RNA processing enzymes. Could also play a role in inositol recycling and phosphoinositide metabolism. The protein is 3'(2'),5'-bisphosphate nucleotidase 1 (Bpnt1) of Rattus norvegicus (Rat).